A 358-amino-acid chain; its full sequence is MAGGNEVNLNECKRIVPLNTWVLISNFKLAYKVLRRPDGSFNRDLAEFLDRKVPANSFPLDGVFSFDHVDSTTNLLTRIYQPASLLHQTRHGTLELTKPLSTTEIVPVLIFFHGGSFTHSSANSAIYDTFCRRLVTICGVVVVSVDYRRSPEHRYPCAYDDGWNALNWVKSRVWLQSGKDSNVYVYLAGDSSGGNIAHNVAVRATNEGVKVLGNILLHPMFGGQERTQSEKTLDGKYFVTIQDRDWYWRAYLPEGEDRDHPACNPFGPRGQSLKGVNFPKSLVVVAGLDLVQDWQLAYVDGLKKTGLEVNLLYLKQATIGFYFLPNNDHFHCLMEELNKFVHSIEDSQSKSSPVLLTP.

A2 is subject to N-acetylalanine. Positions H113–G115 match the Involved in the stabilization of the negatively charged intermediate by the formation of the oxyanion hole motif. Residues G115 to S116, Y127, and S191 each bind gibberellin A4. Gibberellin A3 is bound by residues S116, Y127, S191, and F238. S191 is an active-site residue. The active site involves D289. G320 contributes to the gibberellin A4 binding site. Gibberellin A3 is bound at residue G320.

The protein belongs to the 'GDXG' lipolytic enzyme family. In terms of assembly, interacts with the DELLA proteins GAI, RGA, RGL1, RGL2 and RGL3 in a GA-dependent manner. In terms of tissue distribution, widely expressed.

Its subcellular location is the nucleus. Its function is as follows. Functions as a soluble gibberellin (GA) receptor. GA is an essential hormone that regulates growth and development in plants. Binds with high affinity the biologically active gibberellin GA4, but has no affinity for the biologically inactive GAs. In response to GA, interacts with specific DELLA proteins, known as repressors of GA-induced growth, and targets them for degradation via proteasome. Seems to be required for GA signaling that controls root growth, seed germination and flower development. May function as a dominant GA receptor at low GA concentrations in germination. Partially redundant with GID1A and GID1C. The sequence is that of Gibberellin receptor GID1B (GID1B) from Arabidopsis thaliana (Mouse-ear cress).